The sequence spans 178 residues: Ribosome maturation factor RimM (178 aa).

Residues glutamate 101–phenylalanine 178 enclose the PRC barrel domain.

The protein belongs to the RimM family. Binds ribosomal protein uS19.

Its subcellular location is the cytoplasm. Its function is as follows. An accessory protein needed during the final step in the assembly of 30S ribosomal subunit, possibly for assembly of the head region. Essential for efficient processing of 16S rRNA. May be needed both before and after RbfA during the maturation of 16S rRNA. It has affinity for free ribosomal 30S subunits but not for 70S ribosomes. The chain is Ribosome maturation factor RimM from Ectopseudomonas mendocina (strain ymp) (Pseudomonas mendocina).